We begin with the raw amino-acid sequence, 551 residues long: PA-phosphatase related-family protein DDB_G0268928 (551 aa).

Polar residues-rich tracts occupy residues 26–47 and 137–152; these read TESLSDIDSQTDINNTGNSGKD and KYNTRNSGTLRNSSNK. 2 disordered regions span residues 26 to 50 and 123 to 172; these read TESLSDIDSQTDINNTGNSGKDYSS and KGED…NNNN. Residues 153–171 show a composition bias toward low complexity; sequence TQTTVLNNSTTSSNNINNN. 7 consecutive transmembrane segments (helical) span residues 211–231, 232–252, 273–293, 346–366, 393–413, 474–494, and 500–520; these read SYSDATFSILSGVVILFSIIY, SLLVGPIQIMFAFLVSILVFI, LAVGLGLTIPSFFAATGAVVL, ILQLSYISYYIWGYFMEIYIL, MFICSWISTYFIVFSINLIFP, ILPAYGFVSTIAAILIAIATM, and YFVDFLAALPVTIFCLLYGGF.

It belongs to the PA-phosphatase related phosphoesterase family.

Its subcellular location is the membrane. The sequence is that of PA-phosphatase related-family protein DDB_G0268928 from Dictyostelium discoideum (Social amoeba).